A 395-amino-acid chain; its full sequence is Cysteine synthase 2 (395 aa).

The chain crosses the membrane as a helical span at residues 6–22 (QDLASGIAMGAVFMYLL). Lys-83 is modified (N6-(pyridoxal phosphate)lysine). Pyridoxal 5'-phosphate-binding positions include 228 to 232 (GTGGT) and Ser-335.

This sequence belongs to the cysteine synthase/cystathionine beta-synthase family. It depends on pyridoxal 5'-phosphate as a cofactor.

The protein resides in the mitochondrion. It localises to the mitochondrion outer membrane. The enzyme catalyses O-acetyl-L-serine + hydrogen sulfide = L-cysteine + acetate. Putative cysteine synthase that catalyzes the conversion of O-acetyl-L-serine (OAS) into cysteine, the last step in the cysteine biosynthesis pathway. However, in contrast to cysteine synthase cys11, this CS-like protein seems not to function in cysteine biosynthesis, at least under normal growth conditions, although the transcript is produced. This is Cysteine synthase 2 (cys12) from Schizosaccharomyces pombe (strain 972 / ATCC 24843) (Fission yeast).